The sequence spans 109 residues: uncharacterized protein (109 aa).

2 consecutive transmembrane segments (helical) span residues 18 to 38 (TTLA…LLTL) and 48 to 68 (AGLI…VIAL).

Its subcellular location is the cell membrane. This is an uncharacterized protein from Mycobacterium tuberculosis (strain CDC 1551 / Oshkosh).